A 587-amino-acid chain; its full sequence is Bifunctional lycopene cyclase/phytoene synthase (587 aa).

Positions 1-242 are lycopene beta-cyclase; sequence MGYDYALVHV…IVFGIAAFDK (242 aa). 7 consecutive transmembrane segments (helical) span residues 8–28, 35–55, 77–97, 120–140, 150–170, 172–192, and 220–240; these read VHVK…YPVF, RTLF…SYLI, AEEL…YIIL, GKLV…WLIA, LILV…AHFL, ALPL…LWIV, and IEEA…IAAF. A phytoene synthase region spans residues 249–587; that stretch reads AFPEKFDKPA…WVAWSTLMAA (339 aa).

In the N-terminal section; belongs to the lycopene beta-cyclase family. This sequence in the C-terminal section; belongs to the phytoene/squalene synthase family.

The protein resides in the membrane. The enzyme catalyses all-trans-lycopene = gamma-carotene. It catalyses the reaction gamma-carotene = all-trans-beta-carotene. The catalysed reaction is 2 (2E,6E,10E)-geranylgeranyl diphosphate = 15-cis-phytoene + 2 diphosphate. It functions in the pathway carotenoid biosynthesis; beta-carotene biosynthesis. It participates in carotenoid biosynthesis; phytoene biosynthesis; all-trans-phytoene from geranylgeranyl diphosphate: step 1/1. Its function is as follows. Bifunctional enzyme that catalyzes the reactions from geranylgeranyl diphosphate to phytoene (phytoene synthase) and lycopene to beta-carotene via the intermediate gamma-carotene (lycopene cyclase). This is Bifunctional lycopene cyclase/phytoene synthase from Colletotrichum graminicola (strain M1.001 / M2 / FGSC 10212) (Maize anthracnose fungus).